Reading from the N-terminus, the 429-residue chain is Adenylosuccinate synthetase (429 aa).

GTP contacts are provided by residues G13–K19 and G41–T43. D14 serves as the catalytic Proton acceptor. Mg(2+)-binding residues include D14 and G41. Residues D14 to K17, N39 to H42, T130, R144, Q224, T239, and R303 contribute to the IMP site. H42 functions as the Proton donor in the catalytic mechanism. A299–R305 is a binding site for substrate. Residues R305, K331 to D333, and S412 to G414 contribute to the GTP site.

It belongs to the adenylosuccinate synthetase family. As to quaternary structure, homodimer. The cofactor is Mg(2+).

Its subcellular location is the cytoplasm. The catalysed reaction is IMP + L-aspartate + GTP = N(6)-(1,2-dicarboxyethyl)-AMP + GDP + phosphate + 2 H(+). Its pathway is purine metabolism; AMP biosynthesis via de novo pathway; AMP from IMP: step 1/2. Plays an important role in the de novo pathway of purine nucleotide biosynthesis. Catalyzes the first committed step in the biosynthesis of AMP from IMP. This chain is Adenylosuccinate synthetase, found in Psychrobacter sp. (strain PRwf-1).